Consider the following 248-residue polypeptide: N-acylneuraminate-9-phosphatase (248 aa).

Residue Asp12 participates in Mg(2+) binding. Phosphate contacts are provided by Leu13, Asp14, Thr131, Asn132, and Lys164. A Mg(2+)-binding site is contributed by Asp14. Asp189 serves as a coordination point for Mg(2+).

This sequence belongs to the HAD-like hydrolase superfamily. NANP family. It depends on Mg(2+) as a cofactor.

It carries out the reaction N-acetylneuraminate 9-phosphate + H2O = N-acetylneuraminate + phosphate. It catalyses the reaction N-glycoloylneuraminate 9-phosphate + H2O = N-glycoloylneuraminate + phosphate. It functions in the pathway amino-sugar metabolism; N-acetylneuraminate biosynthesis. Inhibited by calcium. Inhibited by vanadate, sodium orthovanate and phosphonate. Catalyzes the dephosphorylation of N-acylneuraminate 9-phosphate (Neu5Ac-9-P) to sialic acid N-acetylneuraminic acid (Neu5Ac). May also use N-glycoloylneuraminate 9-phosphate as substrate. The polypeptide is N-acylneuraminate-9-phosphatase (Mus musculus (Mouse)).